A 215-amino-acid chain; its full sequence is uncharacterized protein (215 aa).

This is an uncharacterized protein from Saccharomyces cerevisiae (strain ATCC 204508 / S288c) (Baker's yeast).